Here is a 374-residue protein sequence, read N- to C-terminus: Guanine nucleotide-binding protein subunit alpha-15 (374 aa).

The region spanning 41-374 is the G-alpha domain; it reads GELKLLLLGT…ARYLDEINLL (334 aa). The interval 44-57 is G1 motif; the sequence is KLLLLGTGESGKST. Residues 49–56, 183–189, 208–212, 277–280, and Ala-346 contribute to the GTP site; these read GTGESGKS, LRSRMPT, DVGGQ, and NKTD. Mg(2+) contacts are provided by Ser-56 and Thr-189. Residues 181-189 form a G2 motif region; sequence DVLRSRMPT. The interval 204 to 213 is G3 motif; the sequence is LRIVDVGGQK. Residues 273–280 form a G4 motif region; it reads ILFLNKTD. The interval 344–349 is G5 motif; it reads TCATDT.

Belongs to the G-alpha family. G(q) subfamily. G proteins are composed of 3 units; alpha, beta and gamma. The alpha chain contains the guanine nucleotide binding site.

Functionally, guanine nucleotide-binding proteins (G proteins) are involved as modulators or transducers in various transmembrane signaling systems. In Oryctolagus cuniculus (Rabbit), this protein is Guanine nucleotide-binding protein subunit alpha-15 (GNA15).